The sequence spans 143 residues: Nucleoside diphosphate kinase (143 aa).

The ATP site is built by Lys-11, Phe-59, Arg-87, Thr-93, Arg-104, and Asn-114. His-117 (pros-phosphohistidine intermediate) is an active-site residue.

Belongs to the NDK family. In terms of assembly, homotetramer. The cofactor is Mg(2+).

It localises to the cytoplasm. The catalysed reaction is a 2'-deoxyribonucleoside 5'-diphosphate + ATP = a 2'-deoxyribonucleoside 5'-triphosphate + ADP. The enzyme catalyses a ribonucleoside 5'-diphosphate + ATP = a ribonucleoside 5'-triphosphate + ADP. Functionally, major role in the synthesis of nucleoside triphosphates other than ATP. The ATP gamma phosphate is transferred to the NDP beta phosphate via a ping-pong mechanism, using a phosphorylated active-site intermediate. In Shewanella sediminis (strain HAW-EB3), this protein is Nucleoside diphosphate kinase.